The primary structure comprises 1155 residues: RhoGEF domain-containing protein gxcJ (1155 aa).

5 disordered regions span residues E114–K216, L259–N333, L429–E460, L484–T508, and S604–Q639. Low complexity-rich tracts occupy residues N115–N153, T161–N211, and N260–N303. Positions N192–L257 form a coiled coil. Over residues Y304–E319 the composition is skewed to polar residues. Residues N320–I330 show a composition bias toward basic and acidic residues. Low complexity predominate over residues F441–D457. Residues S604–N637 are compositionally biased toward low complexity. The DH domain maps to H700–Q874. Residues S1084–T1155 form a disordered region. Composition is skewed to low complexity over residues S1093 to N1121 and Q1128 to Q1137.

GTPase-activating protein. The protein is RhoGEF domain-containing protein gxcJ (gxcJ) of Dictyostelium discoideum (Social amoeba).